The primary structure comprises 1252 residues: LRR receptor-like serine/threonine-protein kinase GSO2 (1252 aa).

Positions 1 to 22 (MQQNSVLLALFFLCFSSGLGSG) are cleaved as a signal peptide. Residues 23 to 876 (QPGQRDDLQT…QRSLSPKTVV (854 aa)) are Extracellular-facing. N62, N77, and N117 each carry an N-linked (GlcNAc...) asparagine glycan. 10 LRR repeats span residues 94–118 (FNNL…LSNL), 120–143 (SSLE…LGSL), 144–166 (VNLK…TFGN), 168–190 (VNLQ…RFGR), 191–215 (LVQL…IGNC), 217–239 (SLAL…LNRL), 240–263 (KNLQ…LGDL), 265–286 (SIQY…RLTE), 287–310 (LANL…EFWR), and 312–335 (NQLE…ICSN). N-linked (GlcNAc...) asparagine glycosylation is present at N157. N214 and N229 each carry an N-linked (GlcNAc...) asparagine glycan. N299 is a glycosylation site (N-linked (GlcNAc...) asparagine). A glycan (N-linked (GlcNAc...) asparagine) is linked at N336. 21 LRR repeats span residues 337 to 360 (TSLK…ISNC), 361 to 384 (QSLK…LFQL), 386 to 408 (ELTN…ISNL), 409 to 433 (TNLQ…GFLG), 435 to 456 (LEIM…IGNC), 457 to 480 (TRLQ…IGRL), 481 to 504 (KDLT…LGNC), 506 to 528 (QMTV…FGFL), 529 to 552 (TALE…LINL), 554 to 575 (NLTR…LCGS), 577 to 599 (SYLS…LGKS), 600 to 622 (TNLD…TFGK), 623 to 648 (ISEL…GLCK), 650 to 670 (LTHI…WLGK), 671 to 695 (LPLL…IFSL), 697 to 719 (NILT…IGNL), 720 to 743 (QALN…IGKL), 745 to 767 (KLFE…IGQL), 768 to 792 (QDLQ…ISTL), 793 to 816 (PKLE…IGDM), and 818 to 839 (SLGY…QFSR). 3 N-linked (GlcNAc...) asparagine glycosylation sites follow: N370, N394, and N407. N455 is a glycosylation site (N-linked (GlcNAc...) asparagine). Residues N538, N554, N559, and N566 are each glycosylated (N-linked (GlcNAc...) asparagine). Residue N709 is glycosylated (N-linked (GlcNAc...) asparagine). A glycan (N-linked (GlcNAc...) asparagine) is linked at N780. Residue N823 is glycosylated (N-linked (GlcNAc...) asparagine). A helical membrane pass occupies residues 877 to 897 (IISAISSLAAIALMVLVIILF). Residues 898 to 1252 (FKQNHDLFKK…YREMQTDTDK (355 aa)) lie on the Cytoplasmic side of the membrane. Residue T945 is modified to Phosphothreonine. The region spanning 948–1232 (LNEEFMIGSG…PSSRQASEYL (285 aa)) is the Protein kinase domain. ATP is bound by residues 954–962 (IGSGGSGKV) and K976. Residues Y1024 and Y1066 each carry the phosphotyrosine modification. D1079 acts as the Proton acceptor in catalysis. S1114 is modified (phosphoserine). Residues Y1124 and Y1131 each carry the phosphotyrosine modification.

This sequence belongs to the protein kinase superfamily. Ser/Thr protein kinase family. As to quaternary structure, interacts with CIF1 and CIF2. In terms of tissue distribution, mostly expressed in siliques, seeds, developing embryos and seedlings, detected in flower buds, but not in roots, leaves or stems.

It localises to the cell membrane. It carries out the reaction L-seryl-[protein] + ATP = O-phospho-L-seryl-[protein] + ADP + H(+). It catalyses the reaction L-threonyl-[protein] + ATP = O-phospho-L-threonyl-[protein] + ADP + H(+). Functionally, together with GSO1, receptor-like serine/threonine-kinase required during the development of the epidermal surface in embryos and cotyledons. Involved in the nuclear division phase of megagametogenesis. In coordination with GSO2, regulates root growth through control of cell division and cell fate specification. Controls seedling root growth by modulating sucrose response after germination. Receptor of the peptide hormones CIF1 and CIF2 required for contiguous Casparian strip diffusion barrier formation in roots. In Arabidopsis thaliana (Mouse-ear cress), this protein is LRR receptor-like serine/threonine-protein kinase GSO2.